The following is a 100-amino-acid chain: NADH-quinone oxidoreductase subunit K (100 aa).

A run of 3 helical transmembrane segments spans residues 3–23, 29–49, and 60–80; these read PTSYYILLSALLFTLGVVGVI, LVLFMSVELMLNSANLALVTF, and IVVFFVIVVAAAEVAVGLALL.

It belongs to the complex I subunit 4L family. NDH-1 is composed of 14 different subunits. Subunits NuoA, H, J, K, L, M, N constitute the membrane sector of the complex.

The protein resides in the cell membrane. The enzyme catalyses a quinone + NADH + 5 H(+)(in) = a quinol + NAD(+) + 4 H(+)(out). Its function is as follows. NDH-1 shuttles electrons from NADH, via FMN and iron-sulfur (Fe-S) centers, to quinones in the respiratory chain. The immediate electron acceptor for the enzyme in this species is believed to be ubiquinone. Couples the redox reaction to proton translocation (for every two electrons transferred, four hydrogen ions are translocated across the cytoplasmic membrane), and thus conserves the redox energy in a proton gradient. This Roseiflexus castenholzii (strain DSM 13941 / HLO8) protein is NADH-quinone oxidoreductase subunit K.